A 152-amino-acid chain; its full sequence is Stigma-specific STIG1-like protein 1 (152 aa).

The signal sequence occupies residues 1–19 (MAFVKLLVSIAITTAITIA).

Belongs to the STIG1 family.

This Arabidopsis thaliana (Mouse-ear cress) protein is Stigma-specific STIG1-like protein 1.